A 478-amino-acid polypeptide reads, in one-letter code: Pyruvate kinase (478 aa).

Arg-35 contacts substrate. Asn-37, Ser-39, and Asp-69 together coordinate K(+). 37–40 (NMSH) is an ATP binding site. ATP is bound by residues Arg-76 and Lys-157. Glu-219 serves as a coordination point for Mg(2+). Residues Gly-242, Asp-243, and Thr-275 each contribute to the substrate site. Asp-243 provides a ligand contact to Mg(2+).

This sequence belongs to the pyruvate kinase family. In terms of assembly, homotetramer. The cofactor is Mg(2+). K(+) is required as a cofactor.

The enzyme catalyses pyruvate + ATP = phosphoenolpyruvate + ADP + H(+). The protein operates within carbohydrate degradation; glycolysis; pyruvate from D-glyceraldehyde 3-phosphate: step 5/5. The protein is Pyruvate kinase (pyk) of Methylorubrum extorquens (strain ATCC 14718 / DSM 1338 / JCM 2805 / NCIMB 9133 / AM1) (Methylobacterium extorquens).